A 144-amino-acid chain; its full sequence is Large ribosomal subunit protein uL15 (144 aa).

The tract at residues 1–58 (MRLNELAPEPGSRPSAKRVGRGIGSGLGKTGGRGHKGLKSRSGGSVAPGFEGGQQPLA) is disordered. Residues 21 to 31 (RGIGSGLGKTG) show a composition bias toward gly residues.

It belongs to the universal ribosomal protein uL15 family. As to quaternary structure, part of the 50S ribosomal subunit.

In terms of biological role, binds to the 23S rRNA. This Marinobacter nauticus (strain ATCC 700491 / DSM 11845 / VT8) (Marinobacter aquaeolei) protein is Large ribosomal subunit protein uL15.